The primary structure comprises 557 residues: Glutamine--tRNA ligase (557 aa).

The 'HIGH' region motif lies at 42–52 (PEPNGYLHIGH). Residues 43–45 (EPN) and 49–55 (HIGHAKS) each bind ATP. L-glutamine contacts are provided by aspartate 75 and tyrosine 220. Residues threonine 239 and 270 to 271 (RL) each bind ATP. The 'KMSKS' region motif lies at 277–281 (LTSKR).

The protein belongs to the class-I aminoacyl-tRNA synthetase family. Monomer.

The protein localises to the cytoplasm. It carries out the reaction tRNA(Gln) + L-glutamine + ATP = L-glutaminyl-tRNA(Gln) + AMP + diphosphate. The protein is Glutamine--tRNA ligase of Haemophilus influenzae (strain ATCC 51907 / DSM 11121 / KW20 / Rd).